Consider the following 111-residue polypeptide: ATP synthase subunit c (111 aa).

The next 2 helical transmembrane spans lie at 38-58 (GLGVVAVGAGLAMIGAIGSGL) and 89-109 (AGIAETASIYSFIVALLLIFV).

This sequence belongs to the ATPase C chain family. As to quaternary structure, F-type ATPases have 2 components, F(1) - the catalytic core - and F(0) - the membrane proton channel. F(1) has five subunits: alpha(3), beta(3), gamma(1), delta(1), epsilon(1). F(0) has three main subunits: a(1), b(2) and c(10-14). The alpha and beta chains form an alternating ring which encloses part of the gamma chain. F(1) is attached to F(0) by a central stalk formed by the gamma and epsilon chains, while a peripheral stalk is formed by the delta and b chains.

It is found in the cell membrane. In terms of biological role, f(1)F(0) ATP synthase produces ATP from ADP in the presence of a proton or sodium gradient. F-type ATPases consist of two structural domains, F(1) containing the extramembraneous catalytic core and F(0) containing the membrane proton channel, linked together by a central stalk and a peripheral stalk. During catalysis, ATP synthesis in the catalytic domain of F(1) is coupled via a rotary mechanism of the central stalk subunits to proton translocation. Functionally, key component of the F(0) channel; it plays a direct role in translocation across the membrane. A homomeric c-ring of between 10-14 subunits forms the central stalk rotor element with the F(1) delta and epsilon subunits. The chain is ATP synthase subunit c from Mycoplasmopsis synoviae (strain 53) (Mycoplasma synoviae).